Consider the following 315-residue polypeptide: Probable cell division protein WhiA (315 aa).

Positions 275 to 309 form a DNA-binding region, H-T-H motif; it reads NLKELGEMVPSGVVSKSGINHRLRKINEIADKIRE.

Belongs to the WhiA family.

Its function is as follows. Involved in cell division and chromosome segregation. This chain is Probable cell division protein WhiA, found in Brevibacillus brevis (strain 47 / JCM 6285 / NBRC 100599).